The sequence spans 503 residues: EZH inhibitory protein (503 aa).

Basic and acidic residues predominate over residues 1-16 (MATQSDMEKEQKHQQD). 3 disordered regions span residues 1 to 72 (MATQ…AAAA), 97 to 462 (HSDR…RSIS), and 483 to 503 (VPPE…PPEP). A compositionally biased stretch (low complexity) spans 41 to 72 (PAASVTTVSSQASPSGGAALSSSTAGSSAAAA). The span at 97 to 107 (HSDRQDCRSPH) shows a compositional bias: basic and acidic residues. Residues 184-197 (YPCSGASTSSQATQ) are compositionally biased toward polar residues. Phosphoserine is present on Ser259. Residues 345–366 (LRSRSTQQRSALLSRRSLSGSA) show a composition bias toward low complexity. Positions 401 to 409 (WHAVRMRAS) are sufficient for interaction with EZH2. A necessary and sufficient for inhibition of PRC2/EED-EZH1 and PRC2/EED-EZH2 complex activity region spans residues 403–423 (AVRMRASSPSPPGRFFLPIPQ). Low complexity predominate over residues 428–453 (SSSSSYASNSSSPSRSPGLSPSSPSP).

Interacts with PRC2/EED-EZH1 complex member EZH1 and with PRC2/EED-EZH2 complex member EZH2; the interaction blocks EZH1/EZH2 methyltransferase activity. Interacts (via C-terminus) with SUZ12 which is a member of the PRC2/EED-EZH1 and PRC2/EED-EZH2 complexes. In testis, detected in male germ cells inside the seminiferous tubules, especially in spermatogonia and round spermatids (at protein level). In the ovary, expressed in primordial follicles and oocytes but not the external follicle cells (at protein level).

It is found in the nucleus. It localises to the cytoplasm. In terms of biological role, inhibits PRC2/EED-EZH1 and PRC2/EED-EZH2 complex function by inhibiting EZH1/EZH2 methyltransferase activity, thereby causing down-regulation of histone H3 trimethylation on 'Lys-27' (H3K27me3). Probably inhibits methyltransferase activity by limiting the stimulatory effect of cofactors such as AEBP2 and JARID2. Inhibits H3K27me3 deposition during spermatogenesis and oogenesis. This chain is EZH inhibitory protein, found in Homo sapiens (Human).